The following is a 1303-amino-acid chain: Protein STU1 (1303 aa).

Disordered stretches follow at residues 239 to 259 (RGSD…NTPV), 531 to 664 (SQRE…GAVS), and 953 to 977 (EASD…NSEH). Polar residues predominate over residues 249–259 (RANTPRSNTPV). Basic and acidic residues predominate over residues 554 to 568 (SLKEAILEKNKELRQ). Residues 573-583 (SRNSGEQSTKI) show a composition bias toward polar residues. Over residues 596–609 (SRLEKSLLRPDVGH) the composition is skewed to basic and acidic residues. Residues 618–629 (SSWTYPSTQSGP) are compositionally biased toward polar residues. Positions 634–648 (KQRERSKTEVHKKSP) are enriched in basic and acidic residues. 2 stretches are compositionally biased toward polar residues: residues 653–664 (RPSSRLDTGAVS) and 955–972 (SDSS…SSKR).

The protein belongs to the CLASP family. Interacts with microtubules.

Its subcellular location is the cytoplasm. The protein resides in the cytoskeleton. The protein localises to the nucleus. It is found in the spindle. Functionally, microtubule binding protein that promotes the stabilization of dynamic microtubules. Required for mitotic spindle formation. This chain is Protein STU1 (STU1), found in Candida albicans (strain SC5314 / ATCC MYA-2876) (Yeast).